Consider the following 441-residue polypeptide: Endothelin receptor type B (441 aa).

A signal peptide spans 1–26 (MQPLPSLCGRALVALILACGVAGIQA). Over 27-100 (EEREFPPAGA…GPIEIKETFK (74 aa)) the chain is Extracellular. The segment at 30 to 87 (EFPPAGATQPLPGTGEMMETPTETSWPGRSNASDPRSSATPQIPRGGRMAGIPPRTPP) is disordered. Residues 41-53 (PGTGEMMETPTET) are compositionally biased toward low complexity. Polar residues predominate over residues 54–70 (SWPGRSNASDPRSSATP). A helical membrane pass occupies residues 101–125 (YINTVVSCLVFVLGIIGNSTLLRII). Topologically, residues 126-136 (YKNKCMRNGPN) are cytoplasmic. Residues 137–162 (ILIASLALGDLLHIIIDIPINTYKLL) form a helical membrane-spanning segment. At 163-174 (AKDWPFGVEMCK) the chain is on the extracellular side. C173 and C254 are oxidised to a cystine. Residues 175-196 (LVPFIQKASVGITVLSLCALSI) traverse the membrane as a helical segment. The Cytoplasmic portion of the chain corresponds to 197 to 217 (DRYRAVASWSRIKGIGVPKWT). Residues 218–242 (AVEIVLIWVVSVVLAVPEAVGFDII) form a helical membrane-spanning segment. At 243–270 (TSDHIGNKLRICLLHPTQKTAFMQFYKT) the chain is on the extracellular side. Residues 271–295 (AKDWWLFSFYFCLPLAITALFYTLM) form a helical membrane-spanning segment. Residues 296–323 (TCEMLRKKSGMQIALNDHLKQRREVAKT) lie on the Cytoplasmic side of the membrane. S304 is subject to Phosphoserine. A helical transmembrane segment spans residues 324 to 349 (VFCLVLVFALCWLPLHLSRILKLTLY). At 350-361 (DQHDPRRCEFLS) the chain is on the extracellular side. A helical transmembrane segment spans residues 362–388 (FLLVLDYIGINMASLNSCINPIALYLV). Topologically, residues 389–441 (SKRFKNCFKSCLCCWCQSFEEKQSLEEKQSCLKFKANDHGYDNFRSSNKYSSS) are cytoplasmic. S-palmitoyl cysteine attachment occurs at residues C402 and C404. A phosphoserine mark is found at S418, S434, and S435. Y438 is modified (phosphotyrosine). A phosphoserine mark is found at S439, S440, and S441.

This sequence belongs to the G-protein coupled receptor 1 family. Endothelin receptor subfamily. EDNRB sub-subfamily. It is not sure whether phosphorylation is on Ser-434 or Ser-435.

The protein resides in the cell membrane. Its function is as follows. Non-specific receptor for endothelin 1, 2, and 3. Mediates its action by association with G proteins that activate a phosphatidylinositol-calcium second messenger system. The chain is Endothelin receptor type B (EDNRB) from Bos taurus (Bovine).